A 703-amino-acid chain; its full sequence is MRESTWVSLLLLLLLPAPQRGGPQDGRGSPEPEPERGPLQPFDLLYASGVAAYYSGDYEGAVRDLEAALRSHRRLRDIRTRCARHCAARRPLAPPGAGPGAELPFFRAVLERARCSRSCQSQRLGGPASRHRVSEDVRSDFQRRVPYNYLQRAYIKLNQLDKAMEAAHTFFMANPEHMEMQQNIEDYKATARVEAPLVDREAKPHLESYNAGVKHYEADDFEAAIKYFEQALREYFNEDMVCRALCEGPQRFEEYEYLGSKGSLYEAIADHYMQVLVCQHECVRELATRPGRLSPIENFLPLHYDYLQFAYYRVGEYVKALECAKAYLMFHPDDQDVLDNVDFYESLLDDSTDPASIEAREDLTAFVKRHKLEAELIKSAAEGLGFSYSEPNYWISYGGRQDENRVPSGVNMDGAEVHGLSMGKKSPPKIGRDLREGGPLLYENITFVYNSEQLNGTQRVLLDNVLSEEQCRELHSVASGIMLVGDGYRGKTSPHTPNEKFEGATVLKALKFGYEGRVPLKSARLFYDISEKARKIVESYFMLNSTLYFSYTHMVCRTALSGQQDRRNDLSHPIHADNCLLDPEANECWKEPPAYTFRDYSALLYMNDDFEGGEFIFTEMDAKTVTASIKPKCGRMISFSSGGENPHGVKAVTRGQRCAVALWFTLDPLYRELERIQADEVIAILDQEQHGKHGLNINPKDEL.

The N-terminal stretch at 1-21 (MRESTWVSLLLLLLLPAPQRG) is a signal peptide. The disordered stretch occupies residues 18 to 40 (PQRGGPQDGRGSPEPEPERGPLQ). 4 TPR repeats span residues 42 to 75 (FDLL…HRRL), 144 to 177 (RVPY…NPEH), 205 to 238 (HLES…YFNE), and 301 to 334 (PLHY…HPDD). N-linked (GlcNAc...) asparagine glycans are attached at residues asparagine 444, asparagine 455, and asparagine 544. Residues 552-666 (THMVCRTALS…RCAVALWFTL (115 aa)) enclose the Fe2OG dioxygenase domain. Fe cation-binding residues include histidine 575, aspartate 577, and histidine 647. Arginine 657 is a catalytic residue. A Prevents secretion from ER motif is present at residues 700–703 (KDEL).

It belongs to the leprecan family. Fe cation is required as a cofactor. Requires L-ascorbate as cofactor. As to expression, detected at low levels in cartilage.

The protein localises to the endoplasmic reticulum. It localises to the sarcoplasmic reticulum. It is found in the golgi apparatus. It catalyses the reaction L-prolyl-[collagen] + 2-oxoglutarate + O2 = trans-3-hydroxy-L-prolyl-[collagen] + succinate + CO2. Its function is as follows. Prolyl 3-hydroxylase that catalyzes the post-translational formation of 3-hydroxyproline on collagens. Contributes to proline 3-hydroxylation of collagen COL4A1 and COL1A1 in tendons, the eye sclera and in the eye lens capsule. Has high activity with the type IV collagen COL4A1, and lower activity with COL1A1. Catalyzes hydroxylation of the first Pro in Gly-Pro-Hyp sequences where Hyp is 4-hydroxyproline. Has no activity on substrates that lack 4-hydroxyproline in the third position. In Rattus norvegicus (Rat), this protein is Prolyl 3-hydroxylase 2.